A 56-amino-acid chain; its full sequence is Large ribosomal subunit protein bL32 (56 aa).

The segment covering 1 to 16 (MAVQKSKKSRSRRGMR) has biased composition (basic residues). The disordered stretch occupies residues 1–38 (MAVQKSKKSRSRRGMRRSHDAVTPENLSVDPVSGETHR).

This sequence belongs to the bacterial ribosomal protein bL32 family.

The chain is Large ribosomal subunit protein bL32 from Colwellia psychrerythraea (strain 34H / ATCC BAA-681) (Vibrio psychroerythus).